The sequence spans 133 residues: Small ribosomal subunit protein uS8 (133 aa).

It belongs to the universal ribosomal protein uS8 family. As to quaternary structure, part of the 30S ribosomal subunit. Contacts proteins S5 and S12.

Its function is as follows. One of the primary rRNA binding proteins, it binds directly to 16S rRNA central domain where it helps coordinate assembly of the platform of the 30S subunit. This Anaplasma phagocytophilum (strain HZ) protein is Small ribosomal subunit protein uS8.